We begin with the raw amino-acid sequence, 229 residues long: Cytidylate kinase (229 aa).

12–20 (GPSGTGKSS) lines the ATP pocket.

It belongs to the cytidylate kinase family. Type 1 subfamily.

The protein resides in the cytoplasm. It catalyses the reaction CMP + ATP = CDP + ADP. It carries out the reaction dCMP + ATP = dCDP + ADP. The protein is Cytidylate kinase of Rhodococcus jostii (strain RHA1).